Reading from the N-terminus, the 417-residue chain is Spermidine/putrescine import ATP-binding protein PotA (417 aa).

The 304-residue stretch at 5 to 308 (IILKDLTKVF…PANRFVAQFV (304 aa)) folds into the ABC transporter domain. 37-44 (GPSGCGKT) contributes to the ATP binding site. Residues 105 to 177 (DFNSKIKANL…TALKCKKINK (73 aa)) form an insert region.

This sequence belongs to the ABC transporter superfamily. Spermidine/putrescine importer (TC 3.A.1.11.1) family. The complex is composed of two ATP-binding proteins (PotA), two transmembrane proteins (PotB and PotC) and a solute-binding protein (PotD).

The protein resides in the cell membrane. It carries out the reaction ATP + H2O + polyamine-[polyamine-binding protein]Side 1 = ADP + phosphate + polyamineSide 2 + [polyamine-binding protein]Side 1.. Functionally, part of the ABC transporter complex PotABCD involved in spermidine/putrescine import. Responsible for energy coupling to the transport system. This chain is Spermidine/putrescine import ATP-binding protein PotA, found in Onion yellows phytoplasma (strain OY-M).